Consider the following 341-residue polypeptide: Uroporphyrinogen decarboxylase (341 aa).

Substrate contacts are provided by residues 25 to 29 (RQAGR), F44, D74, Y151, S206, and H318.

This sequence belongs to the uroporphyrinogen decarboxylase family. Homodimer.

Its subcellular location is the cytoplasm. The catalysed reaction is uroporphyrinogen III + 4 H(+) = coproporphyrinogen III + 4 CO2. It participates in porphyrin-containing compound metabolism; protoporphyrin-IX biosynthesis; coproporphyrinogen-III from 5-aminolevulinate: step 4/4. Its function is as follows. Catalyzes the decarboxylation of four acetate groups of uroporphyrinogen-III to yield coproporphyrinogen-III. This chain is Uroporphyrinogen decarboxylase, found in Flavobacterium johnsoniae (strain ATCC 17061 / DSM 2064 / JCM 8514 / BCRC 14874 / CCUG 350202 / NBRC 14942 / NCIMB 11054 / UW101) (Cytophaga johnsonae).